The sequence spans 386 residues: Protein phosphatase methylesterase 1 (386 aa).

A disordered region spans residues 1-38 (MSALEKSMHLGRLPSRPPLPGSGGSQSGAKMRMGPGRK). At S15 the chain carries Phosphoserine. Residue R16 is modified to Asymmetric dimethylarginine; alternate. R16 carries the post-translational modification Omega-N-methylarginine; alternate. Catalysis depends on residues S156 and D181. The span at 255–265 (IEEEEEDEEGS) shows a compositional bias: acidic residues. Residues 255-280 (IEEEEEDEEGSESVNKRKKEDDMETK) are disordered. Residues 268 to 280 (VNKRKKEDDMETK) are compositionally biased toward basic and acidic residues. H349 is a catalytic residue.

It belongs to the AB hydrolase superfamily. In terms of assembly, binds PPP2CA and PPP2CB. Post-translationally, phosphorylated by SIK1 following increases in intracellular sodium, leading to dissociation from the protein phosphatase 2A (PP2A) complex and subsequent dephosphorylation of sodium/potassium-transporting ATPase ATP1A1. In terms of tissue distribution, ubiquitous. Highly expressed in testis and brain.

The catalysed reaction is [phosphatase 2A protein]-C-terminal L-leucine methyl ester + H2O = [phosphatase 2A protein]-C-terminal L-leucine + methanol + H(+). Demethylates proteins that have been reversibly carboxymethylated. Demethylates PPP2CB (in vitro) and PPP2CA. Binding to PPP2CA displaces the manganese ion and inactivates the enzyme. The chain is Protein phosphatase methylesterase 1 (Ppme1) from Mus musculus (Mouse).